The primary structure comprises 475 residues: Ribulose bisphosphate carboxylase large chain (475 aa).

A propeptide spanning residues 1–2 is cleaved from the precursor; it reads MS. The residue at position 3 (Pro-3) is an N-acetylproline. The substrate site is built by Thr-65, Asn-123, and Thr-173. The active-site Proton acceptor is the Lys-175. Position 177 (Lys-177) interacts with substrate. The Mg(2+) site is built by Lys-201, Asp-203, and Glu-204. Lys-201 bears the N6-carboxylysine mark. 9 residues coordinate substrate: Glu-204, His-294, Arg-295, His-327, Lys-334, Ser-379, Gly-381, Gly-403, and Gly-404. His-294 functions as the Proton acceptor in the catalytic mechanism.

Belongs to the RuBisCO large chain family. Type I subfamily. Heterohexadecamer of 8 large chains and 8 small chains. Requires Mg(2+) as cofactor. In terms of processing, the disulfide bond which can form between Cys-247 in the large chain dimeric partners within the hexadecamer appears to be associated with oxidative stress and protein turnover. The disulfide bonds reported in 1RBO may be the result of oxidation during crystallization.

The protein resides in the plastid. It is found in the chloroplast. It catalyses the reaction 2 (2R)-3-phosphoglycerate + 2 H(+) = D-ribulose 1,5-bisphosphate + CO2 + H2O. The catalysed reaction is D-ribulose 1,5-bisphosphate + O2 = 2-phosphoglycolate + (2R)-3-phosphoglycerate + 2 H(+). Abscisic acid (ABA) causes weak inhibition of RuBisCO catalytic activity, but more potent inhibition of RuBisCO activation. RuBisCO catalyzes two reactions: the carboxylation of D-ribulose 1,5-bisphosphate, the primary event in carbon dioxide fixation, as well as the oxidative fragmentation of the pentose substrate in the photorespiration process. Both reactions occur simultaneously and in competition at the same active site. Binds to abscisic acid (ABA) which has weakly inhibits carboxylation and more strongly inhibits enzyme activation. In Spinacia oleracea (Spinach), this protein is Ribulose bisphosphate carboxylase large chain.